Consider the following 94-residue polypeptide: Protein FAM24B (94 aa).

The N-terminal stretch at 1–21 is a signal peptide; it reads MPVIAGGILAALLLLIVVVLC.

This sequence belongs to the FAM24 family.

It is found in the secreted. This Homo sapiens (Human) protein is Protein FAM24B (FAM24B).